A 456-amino-acid chain; its full sequence is Equilibrative nucleoside transporter 2 (456 aa).

Residues 1–12 (MAHGNAPRDSYH) are Cytoplasmic-facing. Residues 13–29 (LVGISFFILGLGTLLPW) traverse the membrane as a helical segment. Over 30 to 68 (NFFITAIPYFQGRLAGTNSSAETPSTNHTSPTDTFNFNN) the chain is Extracellular. N-linked (GlcNAc...) asparagine glycans are attached at residues Asn47 and Asn56. A helical transmembrane segment spans residues 69 to 93 (WVTLLSQLPLLLFTLLNSFLYQCIP). Residues 94 to 97 (ESVR) lie on the Cytoplasmic side of the membrane. A helical membrane pass occupies residues 98–116 (ILGSLLAILLLFALTAALV). At 117 to 124 (KVDLSPGL) the chain is on the extracellular side. Residues 125–143 (FFSITMASVWFINSFCAVL) form a helical membrane-spanning segment. Over 144–160 (QGSLFGQLGTMPSTYST) the chain is Cytoplasmic. The chain crosses the membrane as a helical span at residues 161–185 (LFLSGQGLAGIFAALAMLTSLASGV). Topologically, residues 186–192 (DPQTSAL) are extracellular. Residues 193-213 (GYFITPCVGILLSIICYLSLP) form a helical membrane-spanning segment. At 214-291 (HLKFARYYLT…VFVVFRKIWL (78 aa)) the chain is on the cytoplasmic side. A Phosphoserine modification is found at Ser251. The helical transmembrane segment at 292 to 311 (TALCLVLVFTVTLSVFPAIT) threads the bilayer. Residues 312–323 (AMVTTSSNSPGK) are Extracellular-facing. The chain crosses the membrane as a helical span at residues 324–342 (WSQFFNPICCFLLFNVMDW). Residues 343 to 359 (LGRSLTSYFLWPDEDSQ) are Cytoplasmic-facing. The chain crosses the membrane as a helical span at residues 360–378 (LLPLLVCLRFLFVPLFMLC). Residues 379–393 (HVPQRARLPIIFWQD) are Extracellular-facing. Residues 394–413 (AYFITFMLLFAISNGYFVSL) form a helical membrane-spanning segment. The Cytoplasmic portion of the chain corresponds to 414 to 431 (TMCLAPRQVLPHEREVAG). The helical transmembrane segment at 432–452 (ALMTFFLALGLSCGASLSFLF) threads the bilayer. Residues 453–456 (KALL) are Extracellular-facing.

The protein belongs to the SLC29A/ENT transporter (TC 2.A.57) family. As to expression, expressed in squeletal muscles. Expressed in testis at the blood-brain-barrier.

The protein resides in the apical cell membrane. Its subcellular location is the basolateral cell membrane. The enzyme catalyses uridine(out) = uridine(in). It catalyses the reaction inosine(in) = inosine(out). The catalysed reaction is adenosine(in) = adenosine(out). It carries out the reaction thymidine(in) = thymidine(out). The enzyme catalyses hypoxanthine(out) = hypoxanthine(in). It catalyses the reaction adenine(out) = adenine(in). The catalysed reaction is cytidine(in) = cytidine(out). It carries out the reaction thymine(out) = thymine(in). The enzyme catalyses uracil(in) = uracil(out). It catalyses the reaction guanine(out) = guanine(in). The catalysed reaction is guanosine(in) = guanosine(out). Functionally, bidirectional uniporter involved in the facilitative transport of nucleosides and nucleobases, and contributes to maintaining their cellular homeostasis. Functions as a Na(+)-independent, passive transporter. Involved in the transport of nucleosides such as inosine, adenosine, uridine, thymidine, cytidine and guanosine. Also able to transport purine nucleobases (hypoxanthine, adenine, guanine) and pyrimidine nucleobases (thymine, uracil). Involved in nucleoside transport at basolateral membrane of kidney cells, allowing liver absorption of nucleoside metabolites. Mediates apical nucleoside uptake into Sertoli cells, thereby regulating the transport of nucleosides in testis across the blood-testis-barrier. Mediates both the influx and efflux of hypoxanthine in skeletal muscle microvascular endothelial cells to control the amount of intracellular hypoxanthine available for xanthine oxidase-mediated ROS production. The protein is Equilibrative nucleoside transporter 2 of Rattus norvegicus (Rat).